Here is a 199-residue protein sequence, read N- to C-terminus: NAD(P)H dehydrogenase (quinone) (199 aa).

Positions 4–190 (MLVLYYSAYG…DDARFQGRRV (187 aa)) constitute a Flavodoxin-like domain. FMN is bound by residues 10-15 (SAYGHM) and 78-80 (TRY). Residue tyrosine 12 participates in NAD(+) binding. Tryptophan 98 contributes to the substrate binding site. FMN contacts are provided by residues 113 to 119 (STATQHG) and histidine 134. The interval 158–181 (GAPYGMTTTADGDGSRQPSAQELD) is disordered. Over residues 163–177 (MTTTADGDGSRQPSA) the composition is skewed to polar residues.

It belongs to the WrbA family. Requires FMN as cofactor.

It catalyses the reaction a quinone + NADH + H(+) = a quinol + NAD(+). The enzyme catalyses a quinone + NADPH + H(+) = a quinol + NADP(+). The polypeptide is NAD(P)H dehydrogenase (quinone) (Brucella ovis (strain ATCC 25840 / 63/290 / NCTC 10512)).